The sequence spans 160 residues: Small ribosomal subunit protein uS7 (160 aa).

It belongs to the universal ribosomal protein uS7 family. Part of the 30S ribosomal subunit. Contacts proteins S9 and S11.

In terms of biological role, one of the primary rRNA binding proteins, it binds directly to 16S rRNA where it nucleates assembly of the head domain of the 30S subunit. Is located at the subunit interface close to the decoding center, probably blocks exit of the E-site tRNA. This is Small ribosomal subunit protein uS7 from Anaplasma phagocytophilum (strain HZ).